Consider the following 86-residue polypeptide: Putative defensin-like protein 189 (86 aa).

An N-terminal signal peptide occupies residues 1-28 (MKMAKSANEIGFITCLVVFLVLTGQSNG). 4 disulfides stabilise this stretch: cysteine 39/cysteine 85, cysteine 52/cysteine 71, cysteine 57/cysteine 80, and cysteine 61/cysteine 82.

The protein belongs to the DEFL family.

It localises to the secreted. The sequence is that of Putative defensin-like protein 189 from Arabidopsis thaliana (Mouse-ear cress).